Reading from the N-terminus, the 146-residue chain is uncharacterized protein (146 aa).

The N-acetyltransferase domain occupies 7–146; it reads LQINYKTDEL…EGHDILIWNP (140 aa).

This is an uncharacterized protein from Staphylococcus epidermidis (strain ATCC 35984 / DSM 28319 / BCRC 17069 / CCUG 31568 / BM 3577 / RP62A).